A 461-amino-acid chain; its full sequence is Cysteine--tRNA ligase (461 aa).

Zn(2+) is bound at residue Cys30. A 'HIGH' region motif is present at residues 32–42; the sequence is PTVYSYAHIGN. Cys212, His237, and Glu241 together coordinate Zn(2+). The 'KMSKS' region motif lies at 270-274; the sequence is KMSKS. Lys273 serves as a coordination point for ATP.

This sequence belongs to the class-I aminoacyl-tRNA synthetase family. As to quaternary structure, monomer. Requires Zn(2+) as cofactor.

It localises to the cytoplasm. The catalysed reaction is tRNA(Cys) + L-cysteine + ATP = L-cysteinyl-tRNA(Cys) + AMP + diphosphate. The polypeptide is Cysteine--tRNA ligase (Maricaulis maris (strain MCS10) (Caulobacter maris)).